The primary structure comprises 407 residues: MKYDNLLDRFIKYVKVNTRSDPDSETTPSTESQEVFALTILKPEMEAIGLQDVHYNPVNGYLIGTLPANNPTLTRKIGFIAHMDTADFNAENVNPQIIDNYQGGDITLGSSNYKLDPEAFPNLNNYIGQTLITTDGTTLLGADDKSGIAEIMTAIEFLTSQPQIEHCDIKVAFGPDEEIGVGADKFEVADFEVDFAYTMDGGPLGELQYETFSAAALEVTFLGRNVHPGTAKDQMINALQLAIDFHEKLPAKERPEYTDGYQGFYHLTGLTGTVEEARASYIIRDFEEASFEARKVKVENIAQSMNAHLGTKRVLVELNDQYYNMKKVIEKDMTAIELAKEVMEELAIKPVIEPIRGGTDGSKISFMGIPTPNIFAGGENMHGRFEFVSLQTMERAVDVIIGLVCKA.

Residue His-82 participates in Zn(2+) binding. Asp-84 is an active-site residue. Asp-143 is a binding site for Zn(2+). Glu-177 (proton acceptor) is an active-site residue. Residues Glu-178, Asp-200, and His-382 each coordinate Zn(2+).

This sequence belongs to the peptidase M20B family. The cofactor is Zn(2+).

The protein resides in the cytoplasm. The enzyme catalyses Release of the N-terminal residue from a tripeptide.. Its function is as follows. Cleaves the N-terminal amino acid of tripeptides. The protein is Peptidase T of Streptococcus pyogenes serotype M49 (strain NZ131).